We begin with the raw amino-acid sequence, 512 residues long: FAD-linked oxidoreductase iacH (512 aa).

The signal sequence occupies residues 1–22; it reads MVSLKACVVAYGFTLLPALVSG. Asparagine 39, asparagine 55, asparagine 69, asparagine 210, asparagine 217, asparagine 278, asparagine 295, and asparagine 367 each carry an N-linked (GlcNAc...) asparagine glycan. The region spanning 77–248 is the FAD-binding PCMH-type domain; it reads LDTPDVQLVV…TSLEKKIYPG (172 aa).

Belongs to the oxygen-dependent FAD-linked oxidoreductase family. FAD serves as cofactor.

It functions in the pathway secondary metabolite biosynthesis. Functionally, FAD-linked oxidoreductase; part of the gene cluster that mediates the biosynthesis of iso-A82775C, a enylepoxycyclohexane and biosynthetic precursor of the chloropestolide anticancer natural products. Within the cluster, the prenyltransferase iacE prenylates siccayne to generate pestalodiol E, using dimethylallyl diphosphate (DMAPP) as cosubstrate. The probable oxidoreductase iacF is then involved in the epoxidation of pestalodiol F to pestalodiol F, which is further converted to pestalofone A by the short-chain dehydrogenase/reductase iacG. Iso-A82775C is subsequently generated from pestalofone A by the short-chain dehydrogenase/reductase iacC. Iso-A82775C is further condensed with maldoxin via a Diels-Alder reaction to produce the anticancer natural products chloropestolides A to E. The chain is FAD-linked oxidoreductase iacH from Pestalotiopsis fici (strain W106-1 / CGMCC3.15140).